The primary structure comprises 500 residues: NAD(P)H-quinone oxidoreductase chain 4, chloroplastic (500 aa).

Helical transmembrane passes span 4–24, 35–55, 87–107, 113–130, 134–154, 167–187, 208–228, 242–262, 274–294, 305–325, 330–350, 386–406, 411–431, and 462–482; these read FPWL…IFFL, YTIC…CYHF, IGPI…AWPV, LFHF…GSFS, LLLF…LLCM, FILY…GLAL, VLEI…SPII, HYST…YGLI, SIFS…AALT, IAYS…SLTD, GALL…FLAG, LALP…GIIT, LLIP…LTPI, and LFLS…PDFV.

This sequence belongs to the complex I subunit 4 family.

Its subcellular location is the plastid. The protein localises to the chloroplast thylakoid membrane. The catalysed reaction is a plastoquinone + NADH + (n+1) H(+)(in) = a plastoquinol + NAD(+) + n H(+)(out). The enzyme catalyses a plastoquinone + NADPH + (n+1) H(+)(in) = a plastoquinol + NADP(+) + n H(+)(out). This is NAD(P)H-quinone oxidoreductase chain 4, chloroplastic (ndhD) from Nicotiana tabacum (Common tobacco).